A 499-amino-acid chain; its full sequence is Taxadiene 5-alpha hydroxylase (499 aa).

A helical; Signal-anchor transmembrane segment spans residues 22 to 42; the sequence is TESFSIALSAIAGILLLLLLF. A heme-binding site is contributed by Cys-445.

It belongs to the cytochrome P450 family. The cofactor is heme.

It localises to the membrane. The enzyme catalyses taxa-4(5),11(12)-diene + reduced [NADPH--hemoprotein reductase] + O2 = taxa-4(20),11-dien-5alpha-ol + oxidized [NADPH--hemoprotein reductase] + H2O + H(+). It functions in the pathway alkaloid biosynthesis; taxol biosynthesis; taxa-4(20),11-dien-5alpha-ol from geranylgeranyl diphosphate: step 2/2. In terms of biological role, catalyzes the first oxygenation step of taxol biosynthesis. Can use both taxa-4(5),11(12)-diene and taxa-4(20),11(12)-diene as substrate. The polypeptide is Taxadiene 5-alpha hydroxylase (Taxus cuspidata (Japanese yew)).